A 294-amino-acid polypeptide reads, in one-letter code: tRNA pseudouridine synthase B (294 aa).

Residue Asp-38 is the Nucleophile of the active site.

The protein belongs to the pseudouridine synthase TruB family. Type 1 subfamily.

It carries out the reaction uridine(55) in tRNA = pseudouridine(55) in tRNA. Responsible for synthesis of pseudouridine from uracil-55 in the psi GC loop of transfer RNAs. The polypeptide is tRNA pseudouridine synthase B (Clostridium perfringens (strain ATCC 13124 / DSM 756 / JCM 1290 / NCIMB 6125 / NCTC 8237 / Type A)).